The following is a 346-amino-acid chain: Large ribosomal subunit protein uL10 (346 aa).

The interval Ala-307–Gly-346 is disordered. The span at Lys-321 to Gly-337 shows a compositional bias: acidic residues.

The protein belongs to the universal ribosomal protein uL10 family. Part of the 50S ribosomal subunit. Forms part of the ribosomal stalk which helps the ribosome interact with GTP-bound translation factors. Forms both a pentameric L10(L12)2(L12)2 and heptameric L10(L12)2(L12)2(L12)2 complex, where L10 forms an elongated spine to which the L12 dimers bind in a sequential fashion. The proportion of heptameric complexes increases during cell growth.

Forms part of the ribosomal stalk, playing a central role in the interaction of the ribosome with GTP-bound translation factors. In Methanosarcina barkeri (strain Fusaro / DSM 804), this protein is Large ribosomal subunit protein uL10.